A 135-amino-acid polypeptide reads, in one-letter code: Centromere protein S (135 aa).

The disordered stretch occupies residues 103–135 (SLEQKEKKKKKSVSGGNVSRNSDMDTVVPESKD).

It belongs to the TAF9 family. CENP-S/MHF1 subfamily. As to quaternary structure, heterodimer with CENPX, sometimes called MHF; this interaction stabilizes both partners. MHF heterodimers can assemble to form tetrameric structures. MHF also coassemble with CENPT-CENPW heterodimers at centromeres to form the tetrameric CENP-T-W-S-X complex. Forms a discrete complex with FANCM and CENPX, called FANCM-MHF; this interaction, probably mediated by direct binding between CENPS and FANCM, leads to synergistic activation of double-stranded DNA binding and strongly stimulates FANCM-mediated DNA remodeling. Recruited by FANCM to the Fanconi anemia (FA) core complex, which consists of CENPS, CENPX, FANCA, FANCB, FANCC, FANCE, FANCF, FANCG, FANCL, FANCM, FAAP24 and FAAP100. The FA core complex associates with Bloom syndrome (BLM) complex, which consists of at least BLM, DNA topoisomerase 3-alpha (TOP3A), RMI1/BLAP75, RPA1/RPA70 and RPA2/RPA32. The super complex between FA and BLM is called BRAFT. Component of the CENPA-CAD complex, composed of CENPI, CENPK, CENPL, CENPO, CENPP, CENPQ, CENPR and CENPS. The CENPA-CAD complex is probably recruited on centromeres by the CENPA-NAC complex, at least composed of CENPA, CENPC, CENPH, CENPM, CENPN, CENPT and CENPU.

It is found in the nucleus. The protein resides in the chromosome. Its subcellular location is the centromere. It localises to the kinetochore. DNA-binding component of the Fanconi anemia (FA) core complex. Required for the normal activation of the FA pathway, leading to monoubiquitination of the FANCI-FANCD2 complex in response to DNA damage, cellular resistance to DNA cross-linking drugs, and prevention of chromosomal breakage. In complex with CENPX (MHF heterodimer), crucial cofactor for FANCM in both binding and ATP-dependent remodeling of DNA. Stabilizes FANCM. In complex with CENPX and FANCM (but not other FANC proteins), rapidly recruited to blocked forks and promotes gene conversion at blocked replication forks. In complex with CENPT, CENPW and CENPX (CENP-T-W-S-X heterotetramer), involved in the formation of a functional kinetochore outer plate, which is essential for kinetochore-microtubule attachment and faithful mitotic progression. As a component of MHF and CENP-T-W-S-X complexes, binds DNA and bends it to form a nucleosome-like structure. DNA-binding function is fulfilled in the presence of CENPX, with the following preference for DNA substates: Holliday junction &gt; double-stranded &gt; splay arm &gt; single-stranded. Does not bind DNA on its own. The polypeptide is Centromere protein S (cenps) (Xenopus laevis (African clawed frog)).